A 235-amino-acid polypeptide reads, in one-letter code: Exosome complex component Rrp4 (235 aa).

The 75-residue stretch at 63 to 137 (GDLVIGYVTD…DEYPIILTLK (75 aa)) folds into the S1 motif domain. A KH domain is found at 147–203 (GTVVEITPVKVPRVIGKRGSMLNTLMELGCDIVVGQNGRIWVKCKDPRDEVFLASLI).

It belongs to the RRP4 family. In terms of assembly, component of the archaeal exosome complex. Forms a trimer of Rrp4 and/or Csl4 subunits. The trimer associates with a hexameric ring-like arrangement composed of 3 Rrp41-Rrp42 heterodimers.

The protein resides in the cytoplasm. In terms of biological role, non-catalytic component of the exosome, which is a complex involved in RNA degradation. Increases the RNA binding and the efficiency of RNA degradation. Confers strong poly(A) specificity to the exosome. This is Exosome complex component Rrp4 from Pyrobaculum aerophilum (strain ATCC 51768 / DSM 7523 / JCM 9630 / CIP 104966 / NBRC 100827 / IM2).